Reading from the N-terminus, the 262-residue chain is Dihydroorotate dehydrogenase B (NAD(+)), electron transfer subunit (262 aa).

The FAD-binding FR-type domain maps to 3–104 (KLQEMMTIVS…MGPLGNGFPV (102 aa)). FAD contacts are provided by residues 53 to 56 (RPIS), 70 to 72 (LYR), and 79 to 80 (GT). Residues C226, C231, C234, and C249 each coordinate [2Fe-2S] cluster.

This sequence belongs to the PyrK family. As to quaternary structure, heterotetramer of 2 PyrK and 2 PyrD type B subunits. It depends on [2Fe-2S] cluster as a cofactor. FAD serves as cofactor.

It functions in the pathway pyrimidine metabolism; UMP biosynthesis via de novo pathway; orotate from (S)-dihydroorotate (NAD(+) route): step 1/1. Functionally, responsible for channeling the electrons from the oxidation of dihydroorotate from the FMN redox center in the PyrD type B subunit to the ultimate electron acceptor NAD(+). The chain is Dihydroorotate dehydrogenase B (NAD(+)), electron transfer subunit from Lactococcus lactis subsp. lactis (strain IL1403) (Streptococcus lactis).